The sequence spans 313 residues: Porphobilinogen deaminase (313 aa).

Cysteine 241 is modified (S-(dipyrrolylmethanemethyl)cysteine).

Belongs to the HMBS family. Monomer. The cofactor is dipyrromethane.

The catalysed reaction is 4 porphobilinogen + H2O = hydroxymethylbilane + 4 NH4(+). It participates in porphyrin-containing compound metabolism; protoporphyrin-IX biosynthesis; coproporphyrinogen-III from 5-aminolevulinate: step 2/4. It functions in the pathway porphyrin-containing compound metabolism; chlorophyll biosynthesis. In terms of biological role, tetrapolymerization of the monopyrrole PBG into the hydroxymethylbilane pre-uroporphyrinogen in several discrete steps. This is Porphobilinogen deaminase from Chlorobium phaeovibrioides (strain DSM 265 / 1930) (Prosthecochloris vibrioformis (strain DSM 265)).